We begin with the raw amino-acid sequence, 20 residues long: Sperm acrosome membrane-associated protein 3, processed form (20 aa).

This sequence belongs to the glycosyl hydrolase 22 family.

Functionally, sperm surface membrane protein that may be involved in sperm-egg plasma membrane adhesion and fusion during fertilization. It could be a potential receptor for the egg oligosaccharide residue N-acetylglucosamine, which is present in the extracellular matrix over the egg plasma membrane. The chain is Sperm acrosome membrane-associated protein 3, processed form (SPACA3) from Vulpes vulpes (Red fox).